Here is a 144-residue protein sequence, read N- to C-terminus: Large ribosomal subunit protein uL15 (144 aa).

A disordered region spans residues 1–54 (MRLNTLSPAAGAKHAPKRVGRGMGSGLGKTAGRGHKGQKSRSGGGVRPGFEGGQ). Composition is skewed to gly residues over residues 21–31 (RGMGSGLGKTA) and 42–52 (SGGGVRPGFEG).

The protein belongs to the universal ribosomal protein uL15 family. In terms of assembly, part of the 50S ribosomal subunit.

Functionally, binds to the 23S rRNA. This chain is Large ribosomal subunit protein uL15, found in Shewanella oneidensis (strain ATCC 700550 / JCM 31522 / CIP 106686 / LMG 19005 / NCIMB 14063 / MR-1).